The primary structure comprises 308 residues: Baculoviral IAP repeat-containing protein bir-2 (308 aa).

BIR repeat units follow at residues 27 to 98 and 170 to 241; these read RFAS…EFVM and RLAT…DFIK. Zn(2+)-binding residues include Cys-68, Cys-71, His-87, Cys-94, Cys-211, Cys-214, His-230, and Cys-237.

Belongs to the IAP family.

This is Baculoviral IAP repeat-containing protein bir-2 from Caenorhabditis elegans.